A 129-amino-acid chain; its full sequence is ATP synthase epsilon chain (129 aa).

The protein belongs to the ATPase epsilon chain family. In terms of assembly, F-type ATPases have 2 components, CF(1) - the catalytic core - and CF(0) - the membrane proton channel. CF(1) has five subunits: alpha(3), beta(3), gamma(1), delta(1), epsilon(1). CF(0) has three main subunits: a, b and c.

Its subcellular location is the cell inner membrane. Functionally, produces ATP from ADP in the presence of a proton gradient across the membrane. This is ATP synthase epsilon chain from Nitratiruptor sp. (strain SB155-2).